The following is a 317-amino-acid chain: MSCLDVMYQVYGPPQPYFAAAYTPYHQKLAYYSKMQEAQECNASPSSSGSGSSSFSSQTPASIKEEEGSPEKERPPEAEYINSRCVLFTYFQGDISSVVDEHFSRALSQPSSYSPSCTSSKAPRSSGPWRDCSFPMSQRSFPASFWNSAYQAPVPPPLGSPLATAHSELPFAAADPYSPAALHGHLHQGATEPWHHAHPHHAHPHHPYALGGALGAQAAPYPRPAAVHEVYAPHFDPRYGPLLMPAASGRPARLATAPAPAPGSPPCELSGKGEPAGAAWAGPGGPFASPSGDVAQGLGLSVDSARRYSLCGASLLS.

Disordered regions lie at residues C41–P76, S108–P128, T191–L214, and R253–D293. Low complexity predominate over residues S44–S57. Positions I63–P76 are enriched in basic and acidic residues. Residues S108 to S120 show a composition bias toward low complexity. Positions H196–H206 are enriched in basic residues. Positions K272–G292 are enriched in low complexity.

This sequence belongs to the vestigial family. In terms of assembly, interacts with TEFs. Binds to TEAD1/TEF1. Skeletal muscle.

It localises to the nucleus. Its function is as follows. May act as a specific coactivator for the mammalian TEFs. May play a role in the development of skeletal muscles. This is Transcription cofactor vestigial-like protein 2 (VGLL2) from Homo sapiens (Human).